Here is a 342-residue protein sequence, read N- to C-terminus: L-lysine 2,3-aminomutase (342 aa).

The Radical SAM core domain occupies 106–329 (HKYQNRALLL…PRLAREIGGE (224 aa)). 3 residues coordinate [4Fe-4S] cluster: cysteine 120, cysteine 124, and cysteine 127. Lysine 332 carries the N6-(pyridoxal phosphate)lysine modification.

Belongs to the radical SAM superfamily. KamA family. [4Fe-4S] cluster serves as cofactor. Requires pyridoxal 5'-phosphate as cofactor.

The enzyme catalyses L-lysine = D-beta-lysine. Its function is as follows. With EpmA is involved in the beta-lysylation step of the post-translational modification of translation elongation factor P (EF-P) on 'Lys-34'. EpmB appears to act before EpmA. Displays lysine 2,3-aminomutase activity, producing (R)-beta-lysine from (S)-alpha-lysine (L-lysine). The chain is L-lysine 2,3-aminomutase (epmB) from Salmonella typhimurium (strain LT2 / SGSC1412 / ATCC 700720).